The following is a 196-amino-acid chain: uncharacterized protein (196 aa).

This is an uncharacterized protein from Pasteurella multocida (strain Pm70).